A 209-amino-acid chain; its full sequence is Probable glutathione peroxidase 8 (209 aa).

Residue Met-1 is modified to N-acetylmethionine. Residues 18–40 (IFAVLLSMVLCTVMLFLLQLKFL) form a helical membrane-spanning segment. The active site involves Cys-79.

The protein belongs to the glutathione peroxidase family.

Its subcellular location is the membrane. It carries out the reaction 2 glutathione + H2O2 = glutathione disulfide + 2 H2O. In Mus musculus (Mouse), this protein is Probable glutathione peroxidase 8 (Gpx8).